Reading from the N-terminus, the 240-residue chain is EF-hand domain-containing protein D2 (240 aa).

Ala2 bears the N-acetylalanine mark. At Ser11 the chain carries Phosphoserine. Residues 13–38 are disordered; that stretch reads RLQMEGEGGGETPEQPGLNGAAAAAA. Phosphoserine is present on residues Ser74 and Ser76. Tyr83 carries the phosphotyrosine modification. 2 EF-hand domains span residues 92 to 127 and 128 to 163; these read KQIKDMEKMFKQYDAGRDGFIDLMELKLMMEKLGAP and QTHLGLKNMIKEVDEDFDSKLSFREFLLIFRKAAAG. Residues Asp105, Asp109, Glu116, Asp141, Asp143, Asp145, Lys147, and Glu152 each contribute to the Ca(2+) site. Residue Lys233 is modified to N6-acetyllysine.

As to quaternary structure, interacts with CASP9; with inactive form. In terms of tissue distribution, found in lymphocytes; preferentially expressed in CD8+ cells.

The protein localises to the membrane raft. In terms of biological role, may regulate B-cell receptor (BCR)-induced immature and primary B-cell apoptosis. Plays a role as negative regulator of the canonical NF-kappa-B-activating branch. Controls spontaneous apoptosis through the regulation of BCL2L1 abundance. In Homo sapiens (Human), this protein is EF-hand domain-containing protein D2 (EFHD2).